A 206-amino-acid chain; its full sequence is Phosphoserine phosphatase (206 aa).

D7 (nucleophile) is an active-site residue. 2 residues coordinate Mg(2+): D7 and D9. D9 (proton donor) is an active-site residue. Substrate contacts are provided by residues E16, R52, S95–G96, and K140. Residue D163 coordinates Mg(2+). A substrate-binding site is contributed by N166.

Belongs to the HAD-like hydrolase superfamily. SerB family. It depends on Mg(2+) as a cofactor.

The enzyme catalyses O-phospho-L-serine + H2O = L-serine + phosphate. It carries out the reaction O-phospho-D-serine + H2O = D-serine + phosphate. It functions in the pathway amino-acid biosynthesis; L-serine biosynthesis; L-serine from 3-phospho-D-glycerate: step 3/3. This is Phosphoserine phosphatase from Wolinella succinogenes (strain ATCC 29543 / DSM 1740 / CCUG 13145 / JCM 31913 / LMG 7466 / NCTC 11488 / FDC 602W) (Vibrio succinogenes).